The primary structure comprises 386 residues: MKLSNEDLCKLNKFWLYCEENQYFNVGYPESAAFDYSILEKFMKFSINNCGDWREESNYKLNSFEFEKEVMRFFSQLFKIPYNDSWGYISNGGTEGNMFSCYLAREIFPTAYIYYSEETHYSVDKIVRLLNIPARKIRSLPSGEIDYQNLVDQIQKDKQKNPIIFANIGTTMRGATDNIQRIQQDLASIGLERNDYYIHADAALSGMIMPFVEQPHPYSFEDGIDSISVSGHKMIGSPIPCGIVLAKRHMVDQISVEVDYISSRDQTISGSRNGHSALFMWTAIKSHSFVDWQGKVNQCLNMAEYTVQRFQEVGINAWRNKNSNTVVFPCPSEPVWRKHSLANSGSVAHIITMPHLDGPDKLDPLIEDVIYDLLPNYNILNVSGQN.

A substrate-binding site is contributed by His-120. Lys-233 carries the N6-(pyridoxal phosphate)lysine modification.

Belongs to the group II decarboxylase family. As to quaternary structure, homotetramer. It depends on pyridoxal 5'-phosphate as a cofactor.

It carries out the reaction L-histidine + H(+) = histamine + CO2. It functions in the pathway siderophore biosynthesis; anguibactin biosynthesis. The chain is Histidine decarboxylase from Vibrio anguillarum (strain ATCC 68554 / 775) (Listonella anguillarum).